The sequence spans 228 residues: UPF0173 metal-dependent hydrolase lin1612 (228 aa).

It belongs to the UPF0173 family.

The polypeptide is UPF0173 metal-dependent hydrolase lin1612 (Listeria innocua serovar 6a (strain ATCC BAA-680 / CLIP 11262)).